Consider the following 400-residue polypeptide: Small ribosomal subunit protein bS1 (400 aa).

S1 motif domains are found at residues 17–87, 107–173, 194–262, and 279–348; these read GDVV…VTYL, EEVV…LSRR, GDVV…LSLK, and GDVV…LSIK. Residues 351–366 are compositionally biased toward basic and acidic residues; sequence EERPAQEEGQKEEKRA. Positions 351 to 400 are disordered; it reads EERPAQEEGQKEEKRAARPRRPRRQEKRDFELPETQTGFSMADLFGDIEL.

This sequence belongs to the bacterial ribosomal protein bS1 family. Post-translationally, phosphorylated.

Its function is as follows. Binds mRNA; thus facilitating recognition of the initiation point. It is needed to translate mRNA with a short Shine-Dalgarno (SD) purine-rich sequence. This chain is Small ribosomal subunit protein bS1 (rpsA), found in Streptococcus pneumoniae (strain ATCC BAA-255 / R6).